The chain runs to 239 residues: 1-(5-phosphoribosyl)-5-[(5-phosphoribosylamino)methylideneamino] imidazole-4-carboxamide isomerase (239 aa).

The active-site Proton acceptor is Asp-8. Residue Asp-129 is the Proton donor of the active site.

It belongs to the HisA/HisF family.

Its subcellular location is the cytoplasm. The catalysed reaction is 1-(5-phospho-beta-D-ribosyl)-5-[(5-phospho-beta-D-ribosylamino)methylideneamino]imidazole-4-carboxamide = 5-[(5-phospho-1-deoxy-D-ribulos-1-ylimino)methylamino]-1-(5-phospho-beta-D-ribosyl)imidazole-4-carboxamide. The protein operates within amino-acid biosynthesis; L-histidine biosynthesis; L-histidine from 5-phospho-alpha-D-ribose 1-diphosphate: step 4/9. The protein is 1-(5-phosphoribosyl)-5-[(5-phosphoribosylamino)methylideneamino] imidazole-4-carboxamide isomerase of Legionella pneumophila (strain Paris).